Reading from the N-terminus, the 514-residue chain is Carboxysome shell carbonic anhydrase (514 aa).

The tract at residues 1–144 (MNTRNTRSKQ…LTAATEQFSR (144 aa)) is N-terminal domain. A catalytic domain region spans residues 151–397 (DDSASAIGFF…GRYPPNDIGH (247 aa)). C173 serves as a coordination point for Zn(2+). Residue D175 is the Proton acceptor of the active site. Residues H242 and C253 each coordinate Zn(2+). The segment at 398–514 (AERYISVGDG…GSPIEEVASA (117 aa)) is C-terminal domain.

Belongs to the beta-class carbonic anhydrase family. CsoSCA subfamily. As to quaternary structure, homodimer, may form filaments. It depends on Zn(2+) as a cofactor.

The protein localises to the carboxysome. It carries out the reaction hydrogencarbonate + H(+) = CO2 + H2O. With respect to regulation, carbonic anhydrase activity is inhibited by ethoxyzolamide, dithiothreitol, cyanide, and divalent metal chelators dipicolinic acid and nitrilotriacetic acid. Functionally, reversible hydration of carbon dioxide. Essential for chemolithotrophic carbon dioxide fixation, supplies CO(2) to RuBisCO (ribulose bisphosphate carboxylase, cbbL-cbbS) in the carboxysome. There are estimated to be 40 CsoSCA dimers per carboxysome. In terms of biological role, unlike beta-carboxysomes, alpha-carboxysomes (Cb) can form without cargo protein. CsoS2 is essential for Cb formation and is also capable of targeting foreign proteins to the Cb. The Cb shell assembles with the aid of CsoS2; CsoS1A, CsoS1B and CsoS1C form the majority of the shell while CsoS4A and CsoS4B form vertices. CsoS1D forms pseudohexamers that probably control metabolite flux into and out of the shell. This is Carboxysome shell carbonic anhydrase from Halothiobacillus neapolitanus (strain ATCC 23641 / c2) (Thiobacillus neapolitanus).